Here is a 162-residue protein sequence, read N- to C-terminus: Transcriptional repressor NrdR (162 aa).

A zinc finger spans residues 3–34 (CPYCHHTDSRVLESRSAEGGQSIRRRRECLAC). One can recognise an ATP-cone domain in the interval 49 to 139 (ITVIKRNGDR…VYRQFQGISD (91 aa)).

It belongs to the NrdR family. It depends on Zn(2+) as a cofactor.

Negatively regulates transcription of bacterial ribonucleotide reductase nrd genes and operons by binding to NrdR-boxes. This Thermosynechococcus vestitus (strain NIES-2133 / IAM M-273 / BP-1) protein is Transcriptional repressor NrdR.